Here is a 464-residue protein sequence, read N- to C-terminus: Protein FAM90A7 (464 aa).

3 disordered regions span residues 1–42 (MMAR…DPRL), 69–387 (VPAT…AGHD), and 410–437 (AAPSFHSPEKPGAFLAQSPHVSEKSEAP). Basic and acidic residues-rich tracts occupy residues 74–89 (GKKEGKENLKPWKPRA) and 97–111 (NKDKGEKEERPRQQD). A compositionally biased stretch (low complexity) spans 180–197 (LASLSPLRKASLSSSSSL).

The protein belongs to the FAM90 family.

In Homo sapiens (Human), this protein is Protein FAM90A7.